The chain runs to 286 residues: Pyridoxine 4-dehydrogenase (286 aa).

Y59 acts as the Proton donor in catalysis. 210–218 (FPLGGFTPL) is a binding site for NADP(+).

The protein belongs to the aldo/keto reductase family. Aldo/keto reductase 2 subfamily.

It carries out the reaction pyridoxine + NADP(+) = pyridoxal + NADPH + H(+). It catalyses the reaction pyridoxine + NAD(+) = pyridoxal + NADH + H(+). Catalyzes the NAD(P)H-dependent reduction of pyridoxal to pyridoxine in vitro. Is not able to reduce 4-pyridoxate, and to oxidize pyridoxine or pyridoxamine. Has Kemp eliminase activity towards the non-physiological substrate 5-nitrobenzisoxazole, producing 4-nitro-2-cyanophenol; this activity is not considered to be physiologically relevant. The chain is Pyridoxine 4-dehydrogenase from Escherichia coli (strain K12).